The chain runs to 198 residues: Uracil phosphoribosyltransferase homolog (198 aa).

It belongs to the UPRTase family.

It localises to the plastid. The protein resides in the chloroplast. This is Uracil phosphoribosyltransferase homolog from Porphyra purpurea (Red seaweed).